A 106-amino-acid polypeptide reads, in one-letter code: Biogenesis of lysosome-related organelles complex 1 subunit 6 (106 aa).

Residues Lys-78 to Gln-106 are disordered. The span at Gln-82–Gly-93 shows a compositional bias: polar residues. Over residues Ser-94–Gln-106 the composition is skewed to low complexity.

This sequence belongs to the BLOC1S6 family. As to quaternary structure, homodimer (isoform 1). Component of the biogenesis of lysosome-related organelles complex-1 (BLOC-1) composed at least of blos-1, blos-2, blos-4, dsbn-1, glo-2, mutd-1 and snpn-1. Isoform 1 interacts with blos-1 and blos-4.

The protein resides in the cytoplasm. The protein localises to the endosome. Its function is as follows. Component of the biogenesis of lysosome-related organelles complex-1 (BLOC-1) involved in gut granule biogenesis. The chain is Biogenesis of lysosome-related organelles complex 1 subunit 6 (glo-2) from Caenorhabditis elegans.